Consider the following 712-residue polypeptide: MEVVDIDARAAKLGIDWSQVNFDSIQLPPGEDFGIESDDEAVYQDDQSEFDTGFGNIIVVDHLPVVPKEKFEKLEGVVKKIYNQLGVIKENGLWMPVDPDTKMTLGYCFIEFNTPQEAQNAKEKSHGYKLDKSHIFAVNMFDDFDRLMNVKEEWEPPQARPYVPGENLQKWLTDEKARDQLVIRSGPDTEVFWNDTRQKAPEPVHKRPYWTESYVQWSPLGTYLVTLHKQGAAVWGGADTFTRLMRYQHSMVKLVDFSPGEKYLVTYHSQEPSNPRDASKVEIKVFDVRTGRMMRDFKGSADEFSIGGPGGVAGASWPVFRWAGGKDDKYFAKLSKNTISVYETETFSLIDKKSMKVDNVVDICWSPTDSILSLFVPEQGGGNQPAKVALVQIPSKVELRQKNLFSVSDCKMYWQSSGEYLAVKVDRYTKTKKSTYSGFELFRIKERDIPIEVLELDNKNDKIIAFAWEPKGHRFAVIHGDQPRPDVSFYSMKTAQNTGRVSKLATLKAKQANALFWSPTGKYIILAGLKGFNGQLEFFNVDELETMATAEHFMATDIEWDPTGRYVATAVTSVHEMENGFTIWSFNGIMLYRILKDHFFQLAWRPRPPSFLTAEKEEEIAKTLKKYSKKYEAEDQDVSLLLSEQDREKRKALKEEWEKWVMQWKSLHEEEKLVRQNLRDGEVSDVEEDEYEAKEVEFEDLIDVTEEIVQES.

The residue at position 1 (methionine 1) is an N-acetylmethionine. The 88-residue stretch at 56-143 (NIIVVDHLPV…HIFAVNMFDD (88 aa)) folds into the RRM domain.

This sequence belongs to the eIF-3 subunit B family. As to quaternary structure, component of the eukaryotic translation initiation factor 3 (eIF-3) complex, which is composed of at least 13 different subunits. Binds to the translation initiation factor TIF3H1.

It is found in the cytoplasm. Functionally, RNA-binding component of the eukaryotic translation initiation factor 3 (eIF-3) complex, which is involved in protein synthesis of a specialized repertoire of mRNAs and, together with other initiation factors, stimulates binding of mRNA and methionyl-tRNAi to the 40S ribosome. The eIF-3 complex specifically targets and initiates translation of a subset of mRNAs involved in cell proliferation. The chain is Eukaryotic translation initiation factor 3 subunit B (TIF3B1) from Arabidopsis thaliana (Mouse-ear cress).